Here is a 334-residue protein sequence, read N- to C-terminus: MADQTISNVLNQPQWRCLESKIEKSTLHYGRFIISPLWKGQANTIGLALRRTLLSEVEGTCITSVKIKNAIHEYSSLSGVQESVHDILINLKKIILSSSFSGIFEGFLSVVGPKTVLASDLNLPSFIKIVNPDQYIATVNKPINFNLQIYIQKGKGYSLKNPISIKQGFFLVDPVFIPIRSVNYSIHSFEDEKATKEFLIVEVWTNGSIEPKEAIKEASYNLVNLFTPLVSQEYQQLKNQLFKEDEKNKELNFIETNSNAISDNENSYNLYNQIFLDQLELSSRAYNSLKKNNINTISDLLKYSYEDLLKIKNFGKKSADQVIEQLKKRFKIQL.

The interval 1 to 233 (MADQTISNVL…NLFTPLVSQE (233 aa)) is alpha N-terminal domain (alpha-NTD). Residues 263–334 (DNENSYNLYN…QLKKRFKIQL (72 aa)) form an alpha C-terminal domain (alpha-CTD) region.

The protein belongs to the RNA polymerase alpha chain family. In terms of assembly, in plastids the minimal PEP RNA polymerase catalytic core is composed of four subunits: alpha, beta, beta', and beta''. When a (nuclear-encoded) sigma factor is associated with the core the holoenzyme is formed, which can initiate transcription.

The protein resides in the plastid. It localises to the chloroplast. The catalysed reaction is RNA(n) + a ribonucleoside 5'-triphosphate = RNA(n+1) + diphosphate. Its function is as follows. DNA-dependent RNA polymerase catalyzes the transcription of DNA into RNA using the four ribonucleoside triphosphates as substrates. The chain is DNA-directed RNA polymerase subunit alpha from Chaetosphaeridium globosum (Charophycean green alga).